The following is a 260-amino-acid chain: Proteasome subunit alpha type-1 (260 aa).

The disordered stretch occupies residues 240 to 260; that stretch reads PRTTGGAAAAAAPGGAEPMQM. Residues 244–260 are compositionally biased toward low complexity; the sequence is GGAAAAAAPGGAEPMQM.

The protein belongs to the peptidase T1A family. The 26S proteasome consists of a 20S proteasome core and two 19S regulatory subunits. The 20S proteasome core is composed of 28 subunits that are arranged in four stacked rings, resulting in a barrel-shaped structure. The two end rings are each formed by seven alpha subunits, and the two central rings are each formed by seven beta subunits. The catalytic chamber with the active sites is on the inside of the barrel.

Its subcellular location is the cytoplasm. It is found in the nucleus. In terms of biological role, the proteasome is a multicatalytic proteinase complex which is characterized by its ability to cleave peptides with Arg, Phe, Tyr, Leu, and Glu adjacent to the leaving group at neutral or slightly basic pH. The proteasome has an ATP-dependent proteolytic activity. The polypeptide is Proteasome subunit alpha type-1 (pas-6) (Caenorhabditis elegans).